Reading from the N-terminus, the 122-residue chain is Flagellar protein FliT (122 aa).

Residues 1–50 form a required for homodimerization region; the sequence is MTSTVEFINRWQRIALLSQSLLELAQRGEWELLLQQEVSYLQSIETVMEK. The tract at residues 60-98 is fliD binding; sequence IQDMVAGYIKQTLDNEQRLKGLLQQRLDELSGLIGQSTR.

This sequence belongs to the FliT family. Homodimer. Interacts with FliD and FlhC.

Its subcellular location is the cytoplasm. The protein resides in the cytosol. Dual-function protein that regulates the transcription of class 2 flagellar operons and that also acts as an export chaperone for the filament-capping protein FliD. As a transcriptional regulator, acts as an anti-FlhDC factor; it directly binds FlhC, thus inhibiting the binding of the FlhC/FlhD complex to class 2 promoters, resulting in decreased expression of class 2 flagellar operons. As a chaperone, effects FliD transition to the membrane by preventing its premature polymerization, and by directing it to the export apparatus. This Salmonella arizonae (strain ATCC BAA-731 / CDC346-86 / RSK2980) protein is Flagellar protein FliT.